A 455-amino-acid chain; its full sequence is Ribulose bisphosphate carboxylase large chain (455 aa).

An N6,N6,N6-trimethyllysine modification is found at lysine 5. Asparagine 114 and threonine 164 together coordinate substrate. The Proton acceptor role is filled by lysine 166. Lysine 168 contacts substrate. Lysine 192, aspartate 194, and glutamate 195 together coordinate Mg(2+). Lysine 192 carries the N6-carboxylysine modification. Histidine 285 acts as the Proton acceptor in catalysis. Residues arginine 286, histidine 318, and serine 370 each contribute to the substrate site.

It belongs to the RuBisCO large chain family. Type I subfamily. As to quaternary structure, heterohexadecamer of 8 large chains and 8 small chains. Mg(2+) serves as cofactor.

The protein localises to the plastid. It localises to the chloroplast. It carries out the reaction 2 (2R)-3-phosphoglycerate + 2 H(+) = D-ribulose 1,5-bisphosphate + CO2 + H2O. It catalyses the reaction D-ribulose 1,5-bisphosphate + O2 = 2-phosphoglycolate + (2R)-3-phosphoglycerate + 2 H(+). Functionally, ruBisCO catalyzes two reactions: the carboxylation of D-ribulose 1,5-bisphosphate, the primary event in carbon dioxide fixation, as well as the oxidative fragmentation of the pentose substrate in the photorespiration process. Both reactions occur simultaneously and in competition at the same active site. This chain is Ribulose bisphosphate carboxylase large chain, found in Tamarindus indica (Tamarind).